The following is a 915-amino-acid chain: Scaffold attachment factor B1 (915 aa).

Low complexity predominate over residues 1-24 (MAETLSGLGDSGAAGAAALSSASS). The disordered stretch occupies residues 1–33 (MAETLSGLGDSGAAGAAALSSASSETGTRRLSD). The residue at position 2 (Ala-2) is an N-acetylalanine. Phosphoserine is present on residues Ser-24 and Ser-55. The region spanning 31-65 (LSDLRVIDLRAELRKRNVDSSGNKSVLMERLKKAI) is the SAP domain. A disordered region spans residues 64 to 118 (AIEDEGGNPDEIEITSEGNKKTSKRSSKGRKPEEEGVEDNGLEENSGDGQEDVET). Residues 67–77 (DEGGNPDEIEI) show a composition bias toward acidic residues. Ser-79 carries the post-translational modification Phosphoserine. A compositionally biased stretch (acidic residues) spans 98 to 118 (EGVEDNGLEENSGDGQEDVET). Glycyl lysine isopeptide (Lys-Gly) (interchain with G-Cter in SUMO2) cross-links involve residues Lys-172 and Lys-186. Thr-188 is subject to Phosphothreonine. Ser-195, Ser-197, and Ser-209 each carry phosphoserine. Positions 221–407 (LGETCKSEPV…EKGRSSCGRN (187 aa)) are disordered. Residues 225 to 234 (CKSEPVKEES) show a composition bias toward basic and acidic residues. Lys-231 is covalently cross-linked (Glycyl lysine isopeptide (Lys-Gly) (interchain with G-Cter in SUMO)). Polar residues predominate over residues 275-286 (SESTAHAQSSKA). Residues 293-309 (VKREPAEQPGDGERTDC) are compositionally biased toward basic and acidic residues. Lys-294 participates in a covalent cross-link: Glycyl lysine isopeptide (Lys-Gly) (interchain with G-Cter in SUMO). Over residues 319–330 (EQSSAASELAEA) the composition is skewed to low complexity. A compositionally biased stretch (basic and acidic residues) spans 346–359 (EARDSKEDGRKFDF). Polar residues predominate over residues 371–383 (ESSTSEGADQKMS). Lys-381 is covalently cross-linked (Glycyl lysine isopeptide (Lys-Gly) (interchain with G-Cter in SUMO2)). Phosphoserine occurs at positions 383 and 384. The segment covering 390 to 401 (DTKRLSKEEKGR) has biased composition (basic and acidic residues). Residue Lys-392 forms a Glycyl lysine isopeptide (Lys-Gly) (interchain with G-Cter in SUMO2) linkage. An RRM domain is found at 406 to 484 (RNFWVSGLSS…KMISVEKAKN (79 aa)). At Ser-415 the chain carries Phosphoserine. 2 stretches are compositionally biased toward basic and acidic residues: residues 477-551 (ISVE…ERSR) and 559-570 (GTERTVVMDKSK). Disordered regions lie at residues 477–641 (ISVE…EREE), 671–708 (RERM…ERRP), and 749–915 (FDHR…TRRY). Residues Lys-483, Lys-514, Lys-543, and Lys-570 each participate in a glycyl lysine isopeptide (Lys-Gly) (interchain with G-Cter in SUMO2) cross-link. The tract at residues 528-792 (GDDGSGEKSK…RHGGPERHGR (265 aa)) is interaction with POLR2A. Interaction with SFRS1; SFRS9 and SFRS10. Residue Lys-578 forms a Glycyl lysine isopeptide (Lys-Gly) (interchain with G-Cter in SUMO1); alternate linkage. Residue Lys-578 forms a Glycyl lysine isopeptide (Lys-Gly) (interchain with G-Cter in SUMO2); alternate linkage. Phosphoserine occurs at positions 580, 582, 601, and 604. Residues 581–641 (GSKERASKSQ…RMQAQWEREE (61 aa)) show a composition bias toward basic and acidic residues. The Nuclear localization signal signature appears at 599-616 (KRSVVSFDKVKEPRKSRD). The segment at 599–915 (KRSVVSFDKV…PSDARFTRRY (317 aa)) is interaction with SAFB2. Position 607 is an N6-acetyllysine (Lys-607). Positions 749 to 796 (FDHRDRGRYPDHSVDRREGSRSMMGEREGQHYPERHGGPERHGRDSRD) are enriched in basic and acidic residues. Arg-811 bears the Omega-N-methylarginine mark. 2 stretches are compositionally biased toward basic and acidic residues: residues 817 to 832 (PRRD…DDRS) and 841 to 851 (MMDRDHKRWQG). Lys-847 participates in a covalent cross-link: Glycyl lysine isopeptide (Lys-Gly) (interchain with G-Cter in SUMO2). Arg-868, Arg-874, and Arg-884 each carry asymmetric dimethylarginine. Over residues 892–901 (GMQGGFGGQS) the composition is skewed to gly residues. Over residues 905 to 915 (RPSDARFTRRY) the composition is skewed to basic and acidic residues.

Monomer and homodimer. Forms heterodimers with SAFB2. Interacts with KHDRBS3. Interacts with CLK2. Interacts with POLR2A, SRSF1/ASF, SRSF9/SRp30c and SFSF10/TRA2B. Interacts with isoform 1 and isoform 2 of SRPK1 and inhibits its activity. Interacts with RBMX. Interacts with FUS. Interacts with ZBED4. Post-translationally, sumoylated by PIAS1 with SUMO1 and SUMO2/3, desumoylated by SENP1. Sumoylation is required for transcriptional repressor activity. As to expression, ubiquitous. Expressed at high levels in the CNS and at low levels in the liver. Expressed in a wide number of breast cancer cell lines.

It is found in the nucleus. Its function is as follows. Binds to scaffold/matrix attachment region (S/MAR) DNA and forms a molecular assembly point to allow the formation of a 'transcriptosomal' complex (consisting of SR proteins and RNA polymerase II) coupling transcription and RNA processing. Functions as an estrogen receptor corepressor and can also bind to the HSP27 promoter and decrease its transcription. Thereby acts as a negative regulator of cell proliferation. When associated with RBMX, binds to and stimulates transcription from the SREBF1 promoter. The chain is Scaffold attachment factor B1 (SAFB) from Homo sapiens (Human).